Here is a 964-residue protein sequence, read N- to C-terminus: Coatomer subunit beta (964 aa).

HEAT repeat units follow at residues 129–166 (ELLE…NFDW), 238–275 (AERS…APTA), 314–351 (KVMQ…SRNI), 393–430 (DVAA…KFPA), and 466–506 (SQIL…QQGS). Over residues 490–501 (RRLAGDQTEEQK) the composition is skewed to basic and acidic residues. Residues 490-530 (RRLAGDQTEEQKQQQGSAGGNAAGSAAEGSGSGNASNKVTS) are disordered. Low complexity predominate over residues 512–526 (AGSAAEGSGSGNASN).

In terms of assembly, oligomeric complex that consists of at least the alpha, beta, beta', gamma, delta, epsilon and zeta subunits. During oogenesis and spermatogenesis, expressed in ovariole, germarium, testis tip and testis.

Its subcellular location is the cytoplasm. It is found in the golgi apparatus membrane. The protein localises to the cytoplasmic vesicle. It localises to the COPI-coated vesicle membrane. Its function is as follows. The coatomer is a cytosolic protein complex that binds to dilysine motifs and reversibly associates with Golgi non-clathrin-coated vesicles, which further mediate biosynthetic protein transport from the ER, via the Golgi up to the trans Golgi network. Coatomer complex is required for budding from Golgi membranes, and is essential for the retrograde Golgi-to-ER transport of dilysine-tagged proteins. Required for limiting lipid storage in lipid droplets. This is Coatomer subunit beta from Drosophila melanogaster (Fruit fly).